Consider the following 127-residue polypeptide: CDGSH iron-sulfur domain-containing protein 3, mitochondrial (127 aa).

Residues 1-14 (MRGAGAILRPAARG) constitute a mitochondrion transit peptide. Position 55 is an N6-acetyllysine; alternate (Lys55). The residue at position 55 (Lys55) is an N6-succinyllysine; alternate. The [2Fe-2S] cluster site is built by Cys60, Cys62, Cys71, and His75. Position 86 is an N6-acetyllysine (Lys86). Residues Cys98, Cys100, Cys109, and His113 each coordinate [2Fe-2S] cluster.

Belongs to the CISD protein family. In terms of assembly, monomer. It depends on [2Fe-2S] cluster as a cofactor.

It localises to the mitochondrion. Its function is as follows. Can transfer its iron-sulfur clusters to the apoferrodoxins FDX1 and FDX2. Contributes to mitochondrial iron homeostasis and in maintaining normal levels of free iron and reactive oxygen species, and thereby contributes to normal mitochondrial function. The sequence is that of CDGSH iron-sulfur domain-containing protein 3, mitochondrial (CISD3) from Homo sapiens (Human).